A 265-amino-acid chain; its full sequence is Tryptophan synthase alpha chain (265 aa).

Active-site proton acceptor residues include E49 and D60.

This sequence belongs to the TrpA family. Tetramer of two alpha and two beta chains.

The enzyme catalyses (1S,2R)-1-C-(indol-3-yl)glycerol 3-phosphate + L-serine = D-glyceraldehyde 3-phosphate + L-tryptophan + H2O. It participates in amino-acid biosynthesis; L-tryptophan biosynthesis; L-tryptophan from chorismate: step 5/5. Its function is as follows. The alpha subunit is responsible for the aldol cleavage of indoleglycerol phosphate to indole and glyceraldehyde 3-phosphate. This Desulfosudis oleivorans (strain DSM 6200 / JCM 39069 / Hxd3) (Desulfococcus oleovorans) protein is Tryptophan synthase alpha chain.